Here is a 1883-residue protein sequence, read N- to C-terminus: Transmembrane protein 131 (1883 aa).

The N-terminal stretch at 1–22 is a signal peptide; that stretch reads MGKRAGGGATGATTAAVSTSAG. At 23-1117 the chain is on the lumenal side; it reads AGLEPAAARS…AEALPRPNWE (1095 aa). The interval 109–283 is papD-L domain; sequence RFEPPMLDFH…ETKGVMRASF (175 aa). Residue Asn-300 is glycosylated (N-linked (GlcNAc...) asparagine). Ser-803 is modified (phosphoserine). The helical transmembrane segment at 1118–1138 threads the bilayer; the sequence is LALYIIISGIMSALFLLVIGT. Residues 1139-1883 are Cytoplasmic-facing; that stretch reads AYLEAQGIWE…WSNSHFPHEN (745 aa). 5 disordered regions span residues 1198–1580, 1593–1656, 1670–1712, 1766–1789, and 1832–1858; these read GAGG…DSLY, LKQR…KNGN, PGGN…PVSN, WESP…HTAT, and MGTE…TYNP. Positions 1237 to 1261 are enriched in low complexity; it reads AKNSSSTSSRTSAQAASSQSANKTS. Positions 1302–1316 are enriched in pro residues; sequence PQPPLPPPVPQPQEP. 2 positions are modified to phosphoserine: Ser-1322 and Ser-1342. Basic and acidic residues-rich tracts occupy residues 1330–1343 and 1353–1364; these read SHPE…HSSE and AMDKDFDHHDSP. Ser-1375 is modified (phosphoserine). The span at 1380 to 1394 shows a compositional bias: basic residues; it reads SKGKGKPLQRKVKPP. Positions 1395–1417 are enriched in basic and acidic residues; sequence KKQEEKEKKGKGKPQEDELKDSL. Positions 1423–1434 are enriched in low complexity; sequence SSTTTETSNPDT. The span at 1436–1458 shows a compositional bias: basic and acidic residues; it reads PLLKEDTEKQKGKQAMPEKHESE. 2 stretches are compositionally biased toward polar residues: residues 1510-1526 and 1542-1553; these read AMTS…TKGT and PNSQELGNTSSS. Residues 1602-1611 are compositionally biased toward pro residues; the sequence is PASPSPPAAP. Low complexity predominate over residues 1619–1630; it reads SYSSIVNSSSSS. Polar residues predominate over residues 1678-1690; the sequence is VSSNKTGFSSSLG. 2 stretches are compositionally biased toward low complexity: residues 1773 to 1784 and 1837 to 1849; these read PSPSWPASSGSP and SPAP…SSPA. Ser-1863 and Ser-1871 each carry phosphoserine.

Belongs to the TMEM131 family. Interacts (via PapD-L domain) with COL1A2 (via C-terminus); the interaction is direct, may occur with other collagen proteins, and is involved in assembly and TRAPPIII ER-to-Golgi transport complex-dependent secretion of collagen. Interacts (via C-terminus) with TRAPPC8 (via C-terminus); the interaction is direct.

It is found in the membrane. Its function is as follows. Collagen binding transmembrane protein involved in collagen secretion by recruiting the ER-to-Golgi transport complex TRAPPIII. May play a role in the immune response to viral infection. This chain is Transmembrane protein 131, found in Homo sapiens (Human).